The sequence spans 534 residues: Prolyl 4-hydroxylase subunit alpha-1 (534 aa).

A signal peptide spans 1–17; sequence MIWYILIIGILLPQSLA. N-linked (GlcNAc...) asparagine glycosylation occurs at asparagine 113. A TPR repeat occupies 205 to 238; it reads VSVLDYLSYAVYQQGDLDKALLLTKKLLELDPEH. The N-linked (GlcNAc...) asparagine glycan is linked to asparagine 259. Residues 411-519 enclose the Fe2OG dioxygenase domain; sequence TAEELQVANY…KWVSNKWLHE (109 aa). Fe cation-binding residues include histidine 429, aspartate 431, and histidine 500. Residue lysine 510 coordinates 2-oxoglutarate.

It belongs to the P4HA family. Heterotetramer of two alpha-1 chains and two beta chains (P4HB)(the beta chain is the multi-functional PDI), where P4HB plays the role of a structural subunit; this tetramer catalyzes the formation of 4-hydroxyproline in collagen. The cofactor is Fe(2+). L-ascorbate serves as cofactor. Expressed in the heart, liver, skeletal muscle, kidney, placenta, lung and pancreas.

The protein resides in the endoplasmic reticulum lumen. The enzyme catalyses L-prolyl-[collagen] + 2-oxoglutarate + O2 = trans-4-hydroxy-L-prolyl-[collagen] + succinate + CO2. Its activity is regulated as follows. Inhibited by poly(L-proline). Functionally, catalyzes the post-translational formation of 4-hydroxyproline in -Xaa-Pro-Gly- sequences in collagens and other proteins. The polypeptide is Prolyl 4-hydroxylase subunit alpha-1 (P4HA1) (Homo sapiens (Human)).